We begin with the raw amino-acid sequence, 208 residues long: Hydrolase phiM (208 aa).

The active-site Charge relay system is the Ser-87.

It belongs to the LovG family.

It participates in secondary metabolite biosynthesis. Hydrolase; part of the gene cluster that mediates the biosynthesis of the antihypercholesterolemic agents phomoidrides which are dimeric anhydrides. Within the pathway, phiM releases the C12-fatty acyl chain from phiA. The pathway begins with the highly reducing polyketide synthase phiA that catalyzes the formation of a C12-fatty acyl-ACP, starting from one acetate and 5 malonate units. The hydrolase phiM is involved in the release of the C12-fatty acyl chain from phiA. The alkylcitrate synthase (ACS) phiJ and the alkylcitrate dehydratase (ACDH) phiI then give rise to decarboxylated monomeric anhydrides by coupling the C12-fatty acyl chain with oxalacetic acid. The cyclase phiC is responsible for the dimerization of the monomeric anhydrides which leads to the production of prephomoidride that contains the characteristic bicyclo[4.3.1]deca-1,6-diene system of phomoidrides. Iterative oxidation catalyzed by the alpha-ketoglutarate-dependent dioxygenase phiK produced then phomoidride A. Finally, the methyltransferase phiE converts phomoidride A to phomoidride B via an acetalization reaction. The phosphatidylethanolamine-binding protein phiB and phiN are not essential for dimerization and their functions have still to be determined. The chain is Hydrolase phiM from Fungal sp. (strain ATCC 74256).